Consider the following 607-residue polypeptide: All-trans-retinol 13,14-reductase (607 aa).

The signal sequence occupies residues methionine 1–glycine 22.

This sequence belongs to the carotenoid/retinoid oxidoreductase family. CrtISO subfamily. It depends on NAD(+) as a cofactor. The cofactor is NADP(+). FAD is required as a cofactor.

It is found in the endoplasmic reticulum membrane. The enzyme catalyses all-trans-13,14-dihydroretinol + A = all-trans-retinol + AH2. Its function is as follows. Catalyzes the saturation of all-trans-retinol to all-trans-13,14-dihydroretinol. In addition, saturates the 7-8 double bond of all-trans-retinol to produce all-trans-7,8-dihydroretinol. Can also use vitamin A2 (all-trans-3,4-didehydroretinol) as a substrate, to produce all-trans-13,14-dihydro-3,4-didehydroretinol or all-trans-7,8-dihydro-3,4-didehydroretinol. May play a role in vitamin A metabolism. The sequence is that of All-trans-retinol 13,14-reductase from Danio rerio (Zebrafish).